The following is a 428-amino-acid chain: 3-phosphoshikimate 1-carboxyvinyltransferase (428 aa).

Residues Lys-21, Ser-22, and Arg-26 each coordinate 3-phosphoshikimate. Lys-21 provides a ligand contact to phosphoenolpyruvate. Phosphoenolpyruvate is bound by residues Gly-94 and Arg-122. Positions 166, 167, 168, 194, 306, and 333 each coordinate 3-phosphoshikimate. Residue Gln-168 participates in phosphoenolpyruvate binding. The active-site Proton acceptor is the Asp-306. The phosphoenolpyruvate site is built by Arg-337, Arg-379, and Lys-405.

The protein belongs to the EPSP synthase family. In terms of assembly, monomer.

Its subcellular location is the cytoplasm. The catalysed reaction is 3-phosphoshikimate + phosphoenolpyruvate = 5-O-(1-carboxyvinyl)-3-phosphoshikimate + phosphate. Its pathway is metabolic intermediate biosynthesis; chorismate biosynthesis; chorismate from D-erythrose 4-phosphate and phosphoenolpyruvate: step 6/7. Its function is as follows. Catalyzes the transfer of the enolpyruvyl moiety of phosphoenolpyruvate (PEP) to the 5-hydroxyl of shikimate-3-phosphate (S3P) to produce enolpyruvyl shikimate-3-phosphate and inorganic phosphate. In Clostridium acetobutylicum (strain ATCC 824 / DSM 792 / JCM 1419 / IAM 19013 / LMG 5710 / NBRC 13948 / NRRL B-527 / VKM B-1787 / 2291 / W), this protein is 3-phosphoshikimate 1-carboxyvinyltransferase.